The chain runs to 165 residues: Protein phosphatase 1 regulatory subunit 14C (165 aa).

Positions 1–12 (MSVATGSSETAG) are enriched in low complexity. Positions 1-73 (MSVATGSSET…QRRHQQGKVT (73 aa)) are disordered. Ser2 bears the N-acetylserine mark. Phosphoserine is present on Ser25. The residue at position 27 (Arg27) is an Omega-N-methylarginine. Ser33 is modified (phosphoserine). Low complexity predominate over residues 35–63 (GSSSGSGSSREDSAPVATAAAAGQVQQQQ). Phosphothreonine; by ILK1 is present on Thr73.

This sequence belongs to the PP1 inhibitor family. Has over 600-fold higher inhibitory activity when phosphorylated, creating a molecular switch for regulating the phosphorylation status of PPP1CA substrates and smooth muscle contraction. The main inhibitory site appears to be Thr-73. Detected in breast cancer.

Its subcellular location is the cytoplasm. It localises to the membrane. Its function is as follows. Inhibitor of the PP1 regulatory subunit PPP1CA. This chain is Protein phosphatase 1 regulatory subunit 14C (PPP1R14C), found in Homo sapiens (Human).